Consider the following 815-residue polypeptide: Probable oligoxyloglucan-reducing end-specific xyloglucanase (815 aa).

The N-terminal stretch at 1-19 (MKFWLQQLGLAVLCASSAA) is a signal peptide. The active-site Nucleophile is the Asp-58. Asn-113 carries an N-linked (GlcNAc...) asparagine glycan. A BNR 1 repeat occupies 118–128 (FVSNDRGATFT). An N-linked (GlcNAc...) asparagine glycan is attached at Asn-180. The BNR 2 repeat unit spans residues 218–228 (YYTTDGGKNWE). N-linked (GlcNAc...) asparagine glycosylation is found at Asn-246, Asn-290, and Asn-304. The BNR 3 repeat unit spans residues 351 to 361 (YLSRDGGKTWK). N-linked (GlcNAc...) asparagine glycosylation occurs at Asn-387. The active-site Proton donor is the Asp-489. The stretch at 545–555 (YSTDGGSEWTK) is one BNR 4 repeat. Residues Asn-564 and Asn-603 are each glycosylated (N-linked (GlcNAc...) asparagine). The BNR 5 repeat unit spans residues 649–658 (YVSTDGGLSY). An N-linked (GlcNAc...) asparagine glycan is attached at Asn-662. BNR repeat units lie at residues 696–706 (YHTTDFGKRWK) and 749–759 (YRSDDNGSTWD). Asn-754 is a glycosylation site (N-linked (GlcNAc...) asparagine).

Belongs to the glycosyl hydrolase 74 family.

Its subcellular location is the secreted. It catalyses the reaction Hydrolysis of cellobiose from the reducing end of xyloglucans consisting of a beta-(1-&gt;4)-linked glucan carrying alpha-D-xylosyl groups on O-6 of the glucose residues. To be a substrate, the first residue must be unsubstituted, the second residue may bear a xylosyl group, whether further glycosylated or not, and the third residue, which becomes the new terminus by the action of the enzyme, is preferably xylosylated, but this xylose residue must not be further substituted.. In terms of biological role, oligoxyloglucan-reducing end-specific xyloglucanase involved in degradation of xyloglucans. Releases the first two glycosyl segments from oligoxyloglucans. Active against cotton xyloglucan, tamarind xyloglucan and tamarind xyloglucan oligomers. The polypeptide is Probable oligoxyloglucan-reducing end-specific xyloglucanase (xgcA) (Neosartorya fischeri (strain ATCC 1020 / DSM 3700 / CBS 544.65 / FGSC A1164 / JCM 1740 / NRRL 181 / WB 181) (Aspergillus fischerianus)).